Here is a 487-residue protein sequence, read N- to C-terminus: Chromosomal replication initiator protein DnaA (487 aa).

The tract at residues 1-71 is domain I, interacts with DnaA modulators; the sequence is MMHDALFERF…TSLVQSEDPD (71 aa). The tract at residues 71 to 141 is domain II; it reads DVLKVEILVR…QGGSGPLFGS (71 aa). The interval 142-364 is domain III, AAA+ region; that stretch reads PLDTRFTFDT…GAFNQLMFRR (223 aa). The ATP site is built by glycine 188, glycine 190, lysine 191, and threonine 192. The segment at 365–487 is domain IV, binds dsDNA; the sequence is SFEPNLSVDR…LKRLINENNA (123 aa).

Belongs to the DnaA family. Oligomerizes as a right-handed, spiral filament on DNA at oriC.

Its subcellular location is the cytoplasm. Functionally, plays an essential role in the initiation and regulation of chromosomal replication. ATP-DnaA binds to the origin of replication (oriC) to initiate formation of the DNA replication initiation complex once per cell cycle. Binds the DnaA box (a 9 base pair repeat at the origin) and separates the double-stranded (ds)DNA. Forms a right-handed helical filament on oriC DNA; dsDNA binds to the exterior of the filament while single-stranded (ss)DNA is stabiized in the filament's interior. The ATP-DnaA-oriC complex binds and stabilizes one strand of the AT-rich DNA unwinding element (DUE), permitting loading of DNA polymerase. After initiation quickly degrades to an ADP-DnaA complex that is not apt for DNA replication. Binds acidic phospholipids. The polypeptide is Chromosomal replication initiator protein DnaA (Agrobacterium fabrum (strain C58 / ATCC 33970) (Agrobacterium tumefaciens (strain C58))).